Consider the following 214-residue polypeptide: Germin-like protein 9-3 (214 aa).

An N-terminal signal peptide occupies residues 1–23; it reads MASSILLLVVLAVVSAPVALVMA. Asn42, Asn60, and Asn69 each carry an N-linked (GlcNAc...) asparagine glycan. Residues 59-202 form the Cupin type-1 domain; it reads MNMSMPMPNA…SFKTDVPTIQ (144 aa). Mn(2+) is bound by residues His104, His106, Glu111, and His150.

The protein belongs to the germin family. Oligomer (believed to be a pentamer but probably hexamer).

The protein localises to the secreted. It localises to the extracellular space. It is found in the apoplast. Its function is as follows. May play a role in plant defense. Probably has no oxalate oxidase activity even if the active site is conserved. The sequence is that of Germin-like protein 9-3 from Oryza sativa subsp. japonica (Rice).